We begin with the raw amino-acid sequence, 386 residues long: Acetylornithine aminotransferase (386 aa).

Pyridoxal 5'-phosphate contacts are provided by residues 94–95 (GT) and Phe-121. N(2)-acetyl-L-ornithine is bound at residue Arg-124. A pyridoxal 5'-phosphate-binding site is contributed by 206-209 (DEVQ). Position 235 is an N6-(pyridoxal phosphate)lysine (Lys-235). Ser-263 is a N(2)-acetyl-L-ornithine binding site. Thr-264 is a pyridoxal 5'-phosphate binding site.

This sequence belongs to the class-III pyridoxal-phosphate-dependent aminotransferase family. ArgD subfamily. As to quaternary structure, homodimer. Pyridoxal 5'-phosphate is required as a cofactor.

It is found in the cytoplasm. The catalysed reaction is N(2)-acetyl-L-ornithine + 2-oxoglutarate = N-acetyl-L-glutamate 5-semialdehyde + L-glutamate. Its pathway is amino-acid biosynthesis; L-arginine biosynthesis; N(2)-acetyl-L-ornithine from L-glutamate: step 4/4. This is Acetylornithine aminotransferase from Listeria monocytogenes serotype 4b (strain F2365).